Here is a 90-residue protein sequence, read N- to C-terminus: Barrier-to-autointegration factor-like protein (90 aa).

This sequence belongs to the BAF family. As to quaternary structure, homodimer. Heterodimerizes with BANF1. Expressed strongly in testis and pancreas. Also detected in brain, colon, liver, lung, ovary, placenta, prostate, small intestine, spleen and thymus. Not detected in heart, kidney and skeletal muscle.

The protein resides in the nucleus. The protein localises to the cytoplasm. Its function is as follows. May play a role in BANF1 regulation and influence tissue-specific roles of BANF1. The polypeptide is Barrier-to-autointegration factor-like protein (BANF2) (Homo sapiens (Human)).